A 185-amino-acid chain; its full sequence is Guanylate kinase (185 aa).

The region spanning 3-181 (TRMIIVAAPS…SYGEFKKIVE (179 aa)) is the Guanylate kinase-like domain. ATP is bound at residue 10 to 17 (APSGAGKS).

The protein belongs to the guanylate kinase family.

Its subcellular location is the cytoplasm. The enzyme catalyses GMP + ATP = GDP + ADP. Functionally, essential for recycling GMP and indirectly, cGMP. The sequence is that of Guanylate kinase from Bdellovibrio bacteriovorus (strain ATCC 15356 / DSM 50701 / NCIMB 9529 / HD100).